Reading from the N-terminus, the 85-residue chain is UPF0335 protein BQ12070 (85 aa).

This sequence belongs to the UPF0335 family.

The polypeptide is UPF0335 protein BQ12070 (Bartonella quintana (strain Toulouse) (Rochalimaea quintana)).